The chain runs to 360 residues: UDP-D-xylose:L-fucose alpha-1,3-D-xylosyltransferase MGP4 (360 aa).

Residues 1-25 form a disordered region; sequence MAQQKFLHQRPIQNPFTNPFSSSPL. The Cytoplasmic portion of the chain corresponds to 1-41; that stretch reads MAQQKFLHQRPIQNPFTNPFSSSPLSTSSISNRPISLLSRN. Residues 14-25 are compositionally biased toward low complexity; the sequence is NPFTNPFSSSPL. A helical; Signal-anchor for type II membrane protein membrane pass occupies residues 42–62; it reads GLLLLLALLVILGVFLPWAGS. Residues 63–360 are Lumenal-facing; the sequence is PLFPSPNKLS…ASESPLGKLE (298 aa). N-linked (GlcNAc...) asparagine glycans are attached at residues N93 and N168. Residues 191–193 carry the DXD motif motif; the sequence is DVD. N-linked (GlcNAc...) asparagine glycans are attached at residues N285 and N310.

It belongs to the glycosyltransferase 77 family. The cofactor is Mn(2+). Mg(2+) serves as cofactor. Widely expressed.

Its subcellular location is the golgi apparatus membrane. Catalyzes the transfer of D-xylose from UDP-alpha-D-xylose onto L-fucose. Probably involved in the biosynthesis of rhamnogalacturonan II (RG-II) through xylosylation of the internal fucose moiety of the A-chain of RG-II, a structurally complex pectic polysaccharide of the primary cell wall. RG-II is essential for the cell wall integrity of rapidly growing tissues such as roots and pollen tube growth and elongation. This chain is UDP-D-xylose:L-fucose alpha-1,3-D-xylosyltransferase MGP4, found in Arabidopsis thaliana (Mouse-ear cress).